The sequence spans 581 residues: Proline--tRNA ligase (581 aa).

It belongs to the class-II aminoacyl-tRNA synthetase family. ProS type 1 subfamily. In terms of assembly, homodimer.

Its subcellular location is the cytoplasm. The enzyme catalyses tRNA(Pro) + L-proline + ATP = L-prolyl-tRNA(Pro) + AMP + diphosphate. In terms of biological role, catalyzes the attachment of proline to tRNA(Pro) in a two-step reaction: proline is first activated by ATP to form Pro-AMP and then transferred to the acceptor end of tRNA(Pro). As ProRS can inadvertently accommodate and process non-cognate amino acids such as alanine and cysteine, to avoid such errors it has two additional distinct editing activities against alanine. One activity is designated as 'pretransfer' editing and involves the tRNA(Pro)-independent hydrolysis of activated Ala-AMP. The other activity is designated 'posttransfer' editing and involves deacylation of mischarged Ala-tRNA(Pro). The misacylated Cys-tRNA(Pro) is not edited by ProRS. The protein is Proline--tRNA ligase of Polaromonas naphthalenivorans (strain CJ2).